Reading from the N-terminus, the 953-residue chain is Atromentin synthetase invA2 (953 aa).

Residues 38–460 are adenylation (A) domain; the sequence is RAVSQYPNHE…SGRIKDTVIV (423 aa). Residues 592–670 enclose the Carrier domain; the sequence is APSTETEKTL…SLAKYVDSLI (79 aa). Residues 597 to 667 are thiolation and peptide carrier (T) domain; it reads TEKTLAGIYA…VISSLAKYVD (71 aa). Serine 629 is subject to O-(pantetheine 4'-phosphoryl)serine. The tract at residues 693–795 is thioesterase (TE) domain; the sequence is PIFMVHPGVG…FTGLINIPPH (103 aa).

Belongs to the ATP-dependent AMP-binding enzyme family.

It functions in the pathway secondary metabolite biosynthesis. Functionally, an L-tyrosine:2-oxoglutarate aminotransferase (probably invD) and atromentin synthetase invA2 catalyze consecutive steps to turn over L-tyrosine into atromentin, which represents the generic precursor molecule for the entire terphenylquinone and pulvinic acid family of pigments, which are widely distributed secondary metabolites in homobasidiomycetes. The first step catalyzed by the aminotransferase converts L-tyrosine in to 4-hydroxyphenylpyruvate (4-HPP). Adenylation of two 4-HPP monomers by the invA2 adenylation (A) domain, covalent tethering of the monomers as a thioester and oxoester onto the invA2 thiolation (T) and thioesterase (TE) domains, respectively, and symmetric C-C-bond formation between two monomers catalyzed by the invA2 TE domain leads to atromentin. The sequence is that of Atromentin synthetase invA2 (invA2) from Paxillus involutus (Naked brimcap).